Here is an 816-residue protein sequence, read N- to C-terminus: Protein EFR3 homolog B (816 aa).

Residues 206 to 219 are compositionally biased toward polar residues; the sequence is SGEGTESRSPSPLQ. The interval 206–230 is disordered; sequence SGEGTESRSPSPLQASEKEKESPAE. Basic and acidic residues predominate over residues 221–230; it reads SEKEKESPAE.

It belongs to the EFR3 family. Component of a phosphatidylinositol 4-kinase (PI4K) complex. Post-translationally, palmitoylated at its N-terminus, anchoring the protein to the plasma membrane.

Its subcellular location is the cell membrane. In terms of biological role, component of a complex required to localize phosphatidylinositol 4-kinase (PI4K) to the plasma membrane. The complex acts as a regulator of phosphatidylinositol 4-phosphate (PtdIns(4)P) synthesis. In the complex, efr3b probably acts as the membrane-anchoring component. The protein is Protein EFR3 homolog B (efr3b) of Danio rerio (Zebrafish).